A 208-amino-acid chain; its full sequence is Large ribosomal subunit protein bL9 (208 aa).

The interval 168–208 (GKVEKGSCTEGESLELGSVDNDINSGNVDSNESEKQDSVSE) is disordered. A compositionally biased stretch (polar residues) spans 188-197 (NDINSGNVDS). The segment covering 199–208 (ESEKQDSVSE) has biased composition (basic and acidic residues).

It belongs to the bacterial ribosomal protein bL9 family.

Binds to the 23S rRNA. In Ehrlichia chaffeensis (strain ATCC CRL-10679 / Arkansas), this protein is Large ribosomal subunit protein bL9.